Here is a 445-residue protein sequence, read N- to C-terminus: MKNVIRTPETHPLTWRLRDDKQPVWLDEYRSKNGYEGARKALTGLSPDEIVSQVKDAGLKGRGGAGFSTGLKWSLMPKDESMNIRYLLCNADEMEPGTYKDRLLMEQLPHLLVEGMLISAFALKAYRGYIFLRGEYIEAAVHLRRAIAEATEAGLLGKNIMGTGFDFELFVHTGAGRYICGEETALINSLEGRRANPRSKPPFPATSGVWGKPTCVNNVETLCNVPAILANGVEWYQNISKSKDAGTKLMGFSGRVKNPGLWELPFGTTAREILEDYAGGMRDGLKFKAWQPGGAGTDFLTEAHLDLPMEFESIGKAGSRLGTALAMAVDHEIGMVSLVRNLEEFFARESCGWCTPCRDGLPWSVKILRALERGEGQPGDIETLEQLCRFLGPGKTFCAHAPGAVEPLQSAIKYFREEFEAGIKQPFSNTHLINGIQPNLLKERW.

61 to 70 (GRGGAGFSTG) is an NAD(+) binding site. 174–221 (GAGRYICGEETALINSLEGRRANPRSKPPFPATSGVWGKPTCVNNVET) lines the FMN pocket. 4 residues coordinate [4Fe-4S] cluster: Cys351, Cys354, Cys357, and Cys398.

Belongs to the complex I 51 kDa subunit family. Composed of 13 different subunits. Subunits NuoCD, E, F, and G constitute the peripheral sector of the complex. FMN is required as a cofactor. Requires [4Fe-4S] cluster as cofactor.

The enzyme catalyses a quinone + NADH + 5 H(+)(in) = a quinol + NAD(+) + 4 H(+)(out). Its function is as follows. NDH-1 shuttles electrons from NADH, via FMN and iron-sulfur (Fe-S) centers, to quinones in the respiratory chain. The immediate electron acceptor for the enzyme in this species is believed to be ubiquinone. Couples the redox reaction to proton translocation (for every two electrons transferred, four hydrogen ions are translocated across the cytoplasmic membrane), and thus conserves the redox energy in a proton gradient. In Salmonella typhimurium (strain LT2 / SGSC1412 / ATCC 700720), this protein is NADH-quinone oxidoreductase subunit F (nuoF).